A 363-amino-acid polypeptide reads, in one-letter code: tRNA N6-adenosine threonylcarbamoyltransferase (363 aa).

Residues His121 and His125 each coordinate Fe cation. Residues 143–147 (LASGG), Asp176, Gly189, and Asn287 contribute to the substrate site. Fe cation is bound at residue Asp315.

Belongs to the KAE1 / TsaD family. Fe(2+) serves as cofactor.

It localises to the cytoplasm. It catalyses the reaction L-threonylcarbamoyladenylate + adenosine(37) in tRNA = N(6)-L-threonylcarbamoyladenosine(37) in tRNA + AMP + H(+). In terms of biological role, required for the formation of a threonylcarbamoyl group on adenosine at position 37 (t(6)A37) in tRNAs that read codons beginning with adenine. Is involved in the transfer of the threonylcarbamoyl moiety of threonylcarbamoyl-AMP (TC-AMP) to the N6 group of A37, together with TsaE and TsaB. TsaD likely plays a direct catalytic role in this reaction. The chain is tRNA N6-adenosine threonylcarbamoyltransferase from Rhodopseudomonas palustris (strain BisA53).